The primary structure comprises 311 residues: 4-hydroxy-tetrahydrodipicolinate synthase (311 aa).

A pyruvate-binding site is contributed by T51. Y140 functions as the Proton donor/acceptor in the catalytic mechanism. The Schiff-base intermediate with substrate role is filled by K168. I209 is a pyruvate binding site.

It belongs to the DapA family. As to quaternary structure, homotetramer; dimer of dimers.

The protein resides in the cytoplasm. The enzyme catalyses L-aspartate 4-semialdehyde + pyruvate = (2S,4S)-4-hydroxy-2,3,4,5-tetrahydrodipicolinate + H2O + H(+). The protein operates within amino-acid biosynthesis; L-lysine biosynthesis via DAP pathway; (S)-tetrahydrodipicolinate from L-aspartate: step 3/4. Functionally, catalyzes the condensation of (S)-aspartate-beta-semialdehyde [(S)-ASA] and pyruvate to 4-hydroxy-tetrahydrodipicolinate (HTPA). This is 4-hydroxy-tetrahydrodipicolinate synthase from Streptococcus suis (strain 98HAH33).